The sequence spans 159 residues: Endoribonuclease YbeY (159 aa).

Zn(2+) contacts are provided by H114, H118, and H124.

This sequence belongs to the endoribonuclease YbeY family. Requires Zn(2+) as cofactor.

The protein localises to the cytoplasm. Single strand-specific metallo-endoribonuclease involved in late-stage 70S ribosome quality control and in maturation of the 3' terminus of the 16S rRNA. In Pectobacterium atrosepticum (strain SCRI 1043 / ATCC BAA-672) (Erwinia carotovora subsp. atroseptica), this protein is Endoribonuclease YbeY.